Here is a 453-residue protein sequence, read N- to C-terminus: MPLPIVAILGRPNVGKSTLVNRLAGSREAIVHDEPGVTRDRTYQEAFWCDRDFTVVDTGGLVFDDDTEFLPLIREQAELALAEAALAVLVVDGQAGLTAADNEIADWLRHQNRPIVVAVNKCESPDKGAAQAAEFWSLGFGEPLPISSIHGSGTGELLDRVLELLPPADEAAGDETEIGVAIVGRPNVGKSSLLNSFLGEQRAIVSPIAGTTRDAIDTVIERNDQRYRLVDTAGIRRKRGVDYGPEFFGINRSFKAIRRADVCLLVIDVLDGVTDQDQKLAGRIEEDGRACVIVVNKWDAHEKDSSTIYEVERQLRDRLYFLDWAPMIFVSALTGQRVEKILDQVNTVVEQHRRRVGTSVINEVLGDAIAWRTPPTTRQGRQGRIYYGTQVTTQPPSFTLFVNDPKLFGESYRRYIERQFRESLGFSGTPIRLFWRGKKSRELERGANRATRV.

EngA-type G domains lie at 4–169 (PIVA…PPAD) and 178–353 (IGVA…EQHR). GTP-binding positions include 10-17 (GRPNVGKS), 57-61 (DTGGL), 120-123 (NKCE), 184-191 (GRPNVGKS), 231-235 (DTAGI), and 296-299 (NKWD). The 86-residue stretch at 354 to 439 (RRVGTSVINE…PIRLFWRGKK (86 aa)) folds into the KH-like domain.

The protein belongs to the TRAFAC class TrmE-Era-EngA-EngB-Septin-like GTPase superfamily. EngA (Der) GTPase family. In terms of assembly, associates with the 50S ribosomal subunit.

Its function is as follows. GTPase that plays an essential role in the late steps of ribosome biogenesis. This chain is GTPase Der, found in Synechococcus sp. (strain ATCC 27144 / PCC 6301 / SAUG 1402/1) (Anacystis nidulans).